The following is an 878-amino-acid chain: MAAEHPEPPKGELQLPPPPPPGHYGAWAAQELQARLAEIGAPIQGSREELVERLQTYTRQTGIVLNRPVLRGEDGDKAAPPPMSAQLSGIPMPPPPMGLPPLQPPPPPPPPPPGLGLGFPMAHPPNLGPPPPLRVGEPVALSEEERLKLAQQQAALLMQQEERAKQAAVLMEQERQQEIAKMGTAVPRPPQDMGQLGVRTPLGPRVAAPVGPVVPTPTVLPMGAPVPRPRGPPPPPGDENREMDDPSVGPKIPQALEKILQLKESRQEEMNSQQEEEEMETDTRSSLGQSASETEEDTVSISKKEKNRKRRNRKKKKKPQRVRAASSESSGDREKDSGRSRGSDPPAADVEIEYVTEEPEIYEPNFIFFKRIFEAFKLTDDVKKEKEKEPEKLDKMESSAVPKKKGFEEEHKDSDDDSSDDEQEKKPEAPKLSKKKLRRMNRFTVAELKQLVARPDVVEMHDVTAQDPKLLVHLKATRNSVPVPRHWCFKRKYLQGKRGIEKPPFELPDFIKRTGIQEMREALQEKEEQKTMKSKMREKVRPKMGKIDIDYQKLHDAFFKWQTKPKLTIHGDLYYEGKEFETRLKEKKPGDLSDELRISLGMPVGPNAHKVPPPWLIAMQRYGPPPSYPNLKIPGLNSPIPESCSFGYHAGGWGKPPVDETGKPLYGDVFGTNAAEFQTKTEEEEIDRTPWGELEPSDEESSEEEEEEESDEDKPDETGFITPADSGLITPGGFSSVPAGMETPELIELRKKKIEEAMDGSETPQLFTVLPEKRTATVGGAMMGSTHIYDMSTVMSRKGPAPELQGVEVALAPEELELDPMAMTQKYEEHVREQQAQVEKEDFSDMVAEHAAKQKQKKRKAQPQDSRGGSKKYKEFKF.

The segment covering 1–10 (MAAEHPEPPK) has biased composition (basic and acidic residues). 2 disordered regions span residues 1–25 (MAAE…GHYG) and 67–136 (RPVL…LRVG). Lys10 is covalently cross-linked (Glycyl lysine isopeptide (Lys-Gly) (interchain with G-Cter in SUMO2)). One can recognise an SAP domain in the interval 24 to 58 (YGAWAAQELQARLAEIGAPIQGSREELVERLQTYT). Pro residues-rich tracts occupy residues 91–114 (PMPP…PPPG) and 122–133 (AHPPNLGPPPPL). Positions 140–177 (ALSEEERLKLAQQQAALLMQQEERAKQAAVLMEQERQQ) form a coiled coil. Disordered stretches follow at residues 183-356 (GTAV…EYVT) and 383-436 (KKEK…SKKK). Over residues 201–221 (PLGPRVAAPVGPVVPTPTVLP) the composition is skewed to low complexity. Omega-N-methylarginine occurs at positions 205, 228, and 230. The segment covering 224–237 (APVPRPRGPPPPPG) has biased composition (pro residues). At Lys258 the chain carries N6-acetyllysine. The span at 260 to 269 (LQLKESRQEE) shows a compositional bias: basic and acidic residues. Lys263 is covalently cross-linked (Glycyl lysine isopeptide (Lys-Gly) (interchain with G-Cter in SUMO2)). Ser272 is subject to Phosphoserine. The residue at position 281 (Thr281) is a Phosphothreonine. 2 positions are modified to phosphoserine: Ser290 and Ser292. Thr294 is subject to Phosphothreonine. Ser300 bears the Phosphoserine mark. The span at 305–321 (EKNRKRRNRKKKKKPQR) shows a compositional bias: basic residues. A compositionally biased stretch (basic and acidic residues) spans 330 to 342 (SGDREKDSGRSRG). The residue at position 343 (Ser343) is a Phosphoserine. Residues Lys383 and Lys395 each participate in a glycyl lysine isopeptide (Lys-Gly) (interchain with G-Cter in SUMO2) cross-link. 2 stretches are compositionally biased toward basic and acidic residues: residues 383–397 (KKEK…DKME) and 405–414 (KGFEEEHKDS). Residues 384 to 533 (KEKEKEPEKL…QEKEEQKTMK (150 aa)) are required for interaction with PRMT9. Ser414, Ser418, and Ser419 each carry phosphoserine. A Glycyl lysine isopeptide (Lys-Gly) (interchain with G-Cter in SUMO2) cross-link involves residue Lys475. An omega-N-methylarginine mark is found at Arg491 and Arg498. Arg491 carries the post-translational modification Symmetric dimethylarginine. Lys526 is covalently cross-linked (Glycyl lysine isopeptide (Lys-Gly) (interchain with G-Cter in SUMO2)). Residues 674 to 740 (AAEFQTKTEE…PGGFSSVPAG (67 aa)) are disordered. Positions 695–715 (EPSDEESSEEEEEEESDEDKP) are enriched in acidic residues. Lys753 participates in a covalent cross-link: Glycyl lysine isopeptide (Lys-Gly) (interchain with G-Cter in SUMO2). A Phosphothreonine modification is found at Thr763. Residues Lys773, Lys826, and Lys840 each participate in a glycyl lysine isopeptide (Lys-Gly) (interchain with G-Cter in SUMO2) cross-link. Residues 827 to 852 (YEEHVREQQAQVEKEDFSDMVAEHAA) are compositionally biased toward basic and acidic residues. The disordered stretch occupies residues 827 to 878 (YEEHVREQQAQVEKEDFSDMVAEHAAKQKQKKRKAQPQDSRGGSKKYKEFKF). Phosphoserine is present on Ser844.

As to quaternary structure, component of the 17S U2 SnRNP complex, a ribonucleoprotein complex that contains small nuclear RNA (snRNA) U2 and a number of specific proteins. Part of the SF3B subcomplex of the 17S U2 SnRNP complex. SF3B associates with the splicing subcomplex SF3A and a 12S RNA unit to form the U2 small nuclear ribonucleoproteins complex (U2 snRNP). Within the SF3B complex, interacts directly with SF3B4. Found in a complex with PRMT9, SF3B2 and SF3B4. Interacts (Arg-491-methylated form) with SMN1 (via Tudor domain). Interacts with RBM7. Interacts with ERCC6. Component of the minor spliceosome. Within this complex, interacts with SCNM1 and CRIPT. In terms of processing, methylation at Arg-491 by PRMT9 is required for the interaction with SMN1.

Its subcellular location is the nucleus. The protein resides in the nucleus speckle. In terms of biological role, component of the 17S U2 SnRNP complex of the spliceosome, a large ribonucleoprotein complex that removes introns from transcribed pre-mRNAs. The 17S U2 SnRNP complex (1) directly participates in early spliceosome assembly and (2) mediates recognition of the intron branch site during pre-mRNA splicing by promoting the selection of the pre-mRNA branch-site adenosine, the nucleophile for the first step of splicing. Within the 17S U2 SnRNP complex, SF3B2 is part of the SF3B subcomplex, which is required for 'A' complex assembly formed by the stable binding of U2 snRNP to the branchpoint sequence in pre-mRNA. Sequence independent binding of SF3A and SF3B subcomplexes upstream of the branch site is essential, it may anchor U2 snRNP to the pre-mRNA. May also be involved in the assembly of the 'E' complex. Also acts as a component of the minor spliceosome, which is involved in the splicing of U12-type introns in pre-mRNAs. This Mus musculus (Mouse) protein is Splicing factor 3B subunit 2.